Consider the following 1055-residue polypeptide: Protein SUPPRESSOR OF QUENCHING 1, chloroplastic (1055 aa).

A chloroplast-targeting transit peptide spans 1-56 (MALKLTSPPSVFSQSRRLSSSSLIPIRSKSTFTGFRSRTGVYLSKTTALQSSTKLS). Valine 57 carries the post-translational modification N-acetylvaline. At 59–327 (AESPAATIAT…FQGSRRDILR (269 aa)) the chain is on the stromal side. Aspartate 80 functions as the Nucleophile in the catalytic mechanism. Mg(2+) contacts are provided by aspartate 80 and aspartate 82. Aspartate 80 contacts substrate. Residue aspartate 82 is the Proton donor of the active site. Residues glutamate 89, 118–122 (TGEAK), 141–144 (AKER), and 183–189 (SSADRIK) each bind substrate. Aspartate 242 serves as a coordination point for Mg(2+). A helical membrane pass occupies residues 328-345 (YGSLGIALSCVYFAATNW). At 346-1055 (KAMQYASPKA…AGGLQLQGTR (710 aa)) the chain is on the lumenal side. The Thioredoxin domain occupies 359–536 (ALVGAKSPSF…LDDVVAAALT (178 aa)). Residues cysteine 431 and cysteine 434 are joined by a disulfide bond. NHL repeat units lie at residues 565-597 (PLKF…TDLE), 611-647 (GFQD…NHAL), 673-712 (GRKG…YSVL), 802-832 (LQHP…LDPV), and 854-887 (GAQL…IDLN).

It in the N-terminal section; belongs to the HAD-like hydrolase superfamily. The protein in the C-terminal section; belongs to the thioredoxin family. It depends on Mg(2+) as a cofactor.

The protein localises to the plastid. It localises to the chloroplast thylakoid membrane. Its function is as follows. Required to maintain light harvesting efficiency, especially during nonphotochemical quenching (NPQ) recovery, via the regulation of chlorophyll excited-state lifetime probably by preventing the formation of a slowly reversible form of antenna quenching. The chain is Protein SUPPRESSOR OF QUENCHING 1, chloroplastic from Arabidopsis thaliana (Mouse-ear cress).